A 130-amino-acid chain; its full sequence is Small ribosomal subunit protein uS8 (130 aa).

The protein belongs to the universal ribosomal protein uS8 family. In terms of assembly, part of the 30S ribosomal subunit. Contacts proteins S5 and S12.

In terms of biological role, one of the primary rRNA binding proteins, it binds directly to 16S rRNA central domain where it helps coordinate assembly of the platform of the 30S subunit. The polypeptide is Small ribosomal subunit protein uS8 (Teredinibacter turnerae (strain ATCC 39867 / T7901)).